The primary structure comprises 186 residues: Elongation factor P (186 aa).

Belongs to the elongation factor P family.

It is found in the cytoplasm. It functions in the pathway protein biosynthesis; polypeptide chain elongation. Involved in peptide bond synthesis. Stimulates efficient translation and peptide-bond synthesis on native or reconstituted 70S ribosomes in vitro. Probably functions indirectly by altering the affinity of the ribosome for aminoacyl-tRNA, thus increasing their reactivity as acceptors for peptidyl transferase. The protein is Elongation factor P of Shewanella sp. (strain W3-18-1).